Here is a 202-residue protein sequence, read N- to C-terminus: Ion-translocating oxidoreductase complex subunit G (202 aa).

A helical transmembrane segment spans residues 11 to 31 (AILLALIALICTALSTGIYLL). Position 177 is an FMN phosphoryl threonine (Thr177).

Belongs to the RnfG family. In terms of assembly, the complex is composed of six subunits: RnfA, RnfB, RnfC, RnfD, RnfE and RnfG. FMN is required as a cofactor.

It is found in the cell inner membrane. Functionally, part of a membrane-bound complex that couples electron transfer with translocation of ions across the membrane. This Pasteurella multocida (strain Pm70) protein is Ion-translocating oxidoreductase complex subunit G.